The primary structure comprises 101 residues: MSSSRRSRTSSRLAAAPPPTDEQMAELISKLQAVLPTRGGEANAKQASSAEVLQEACRYIRRLHREADALSERLAELLLLQPSDLAINGADVPDLIRSLLM.

The disordered stretch occupies residues 1–22 (MSSSRRSRTSSRLAAAPPPTDE). Positions 8–63 (RTSSRLAAAPPPTDEQMAELISKLQAVLPTRGGEANAKQASSAEVLQEACRYIRRL) constitute a bHLH domain.

Belongs to the bHLH protein family.

Functionally, atypical and probable non DNA-binding bHLH transcription factor that integrates multiple signaling pathways to regulate cell elongation and plant development. The protein is Transcription factor ILI2 (ILI2) of Oryza sativa subsp. indica (Rice).